A 294-amino-acid polypeptide reads, in one-letter code: Bifunctional protein FolD 1 (294 aa).

NADP(+)-binding positions include 165–167 (GRS), Ser-190, and Thr-231.

It belongs to the tetrahydrofolate dehydrogenase/cyclohydrolase family. Homodimer.

It carries out the reaction (6R)-5,10-methylene-5,6,7,8-tetrahydrofolate + NADP(+) = (6R)-5,10-methenyltetrahydrofolate + NADPH. It catalyses the reaction (6R)-5,10-methenyltetrahydrofolate + H2O = (6R)-10-formyltetrahydrofolate + H(+). It participates in one-carbon metabolism; tetrahydrofolate interconversion. In terms of biological role, catalyzes the oxidation of 5,10-methylenetetrahydrofolate to 5,10-methenyltetrahydrofolate and then the hydrolysis of 5,10-methenyltetrahydrofolate to 10-formyltetrahydrofolate. This is Bifunctional protein FolD 1 from Paenarthrobacter aurescens (strain TC1).